Consider the following 496-residue polypeptide: Ankyrin repeat domain-containing protein 53 (496 aa).

Residues 1-15 (MASAGSTARRAGSGS) are compositionally biased toward low complexity. A disordered region spans residues 1–66 (MASAGSTARR…RPSEESDQTT (66 aa)). The segment covering 51–60 (AESKQPRPSE) has biased composition (basic and acidic residues). 3 ANK repeats span residues 105 to 135 (KGFTAIHFAAQRGKLACLQVLVEEYKFPVNL), 139 to 172 (NSQTPLHLVIHKDNTTVALPCIYYLLEKGAALNA), and 176 to 205 (NGCTPLHLAVREGLLDCVKVLVQSGANVHA). The disordered stretch occupies residues 292 to 320 (LVSNTKQARATALSKTPEQRGSQCSSSFH).

Interacts with PSRC1; recruited by PSRC1 to the spindle during mitosis. Phosphorylated during mitosis.

The protein localises to the cytoplasm. The protein resides in the cytoskeleton. It is found in the spindle. It localises to the spindle pole. In terms of biological role, required for normal progression through mitosis. Involved in chromosome alignment and cytokinesis via regulation of microtubules polymerization. The sequence is that of Ankyrin repeat domain-containing protein 53 (ANKRD53) from Macaca fascicularis (Crab-eating macaque).